A 256-amino-acid polypeptide reads, in one-letter code: tRNA (guanine-N(1)-)-methyltransferase (256 aa).

Residues G113 and 132 to 137 (VGDYVL) contribute to the S-adenosyl-L-methionine site.

This sequence belongs to the RNA methyltransferase TrmD family. As to quaternary structure, homodimer.

The protein localises to the cytoplasm. The enzyme catalyses guanosine(37) in tRNA + S-adenosyl-L-methionine = N(1)-methylguanosine(37) in tRNA + S-adenosyl-L-homocysteine + H(+). Functionally, specifically methylates guanosine-37 in various tRNAs. The polypeptide is tRNA (guanine-N(1)-)-methyltransferase (Coprothermobacter proteolyticus (strain ATCC 35245 / DSM 5265 / OCM 4 / BT)).